A 217-amino-acid polypeptide reads, in one-letter code: Killer cell lectin-like receptor subfamily B member 1F (217 aa).

At 1–45 (MDTSKVHGNVKPFRCPGYKQASSPSFSPDACRCPHWHHLALKSGC) the chain is on the cytoplasmic side. The LCK-binding motif motif lies at 31–34 (CRCP). Residues 46–66 (AGLILLLLSLIGLSVLVRFLV) form a helical; Signal-anchor for type II membrane protein membrane-spanning segment. The Extracellular portion of the chain corresponds to 67 to 217 (QKPPIEKCSV…WICQKTLIHV (151 aa)). An N-linked (GlcNAc...) asparagine glycan is attached at asparagine 81. Residues 101 to 211 (HWNKCLFVSQ…CSSDNHWICQ (111 aa)) enclose the C-type lectin domain. Disulfide bonds link cysteine 122–cysteine 210 and cysteine 189–cysteine 202.

Highly expressed in dendritic cells. Detectable in natural killer cells.

Its subcellular location is the membrane. Its function is as follows. Binds CLEC2I/Clr-g leading to activation of natural killer cells or costimulation of IL-2 production and proliferation of T-cells in response to antigen stimulation. May contribute to the formation of the immunological synapse between T-cells and antigen-presenting dendritic cells. This is Killer cell lectin-like receptor subfamily B member 1F (Klrb1f) from Mus musculus (Mouse).